A 303-amino-acid chain; its full sequence is Peroxisomal trans-2-enoyl-CoA reductase (303 aa).

23-47 (VTGGATGIGKAIVKELLELGSNVVI) is a binding site for NADP(+). Position 32 is an N6-succinyllysine (lysine 32). Phosphoserine is present on serine 49. The active-site Proton acceptor is tyrosine 179. Residue tyrosine 179 is modified to Phosphotyrosine. Residues 301 to 303 (AKL) carry the Microbody targeting signal motif.

It belongs to the short-chain dehydrogenases/reductases (SDR) family. As to quaternary structure, interacts with PEX5, probably required to target it into peroxisomes.

The protein localises to the peroxisome. The enzyme catalyses a (2E)-enoyl-CoA + NADPH + H(+) = a 2,3-saturated acyl-CoA + NADP(+). It catalyses the reaction (2E)-hexenoyl-CoA + NADPH + H(+) = hexanoyl-CoA + NADP(+). It carries out the reaction (2E)-octenoyl-CoA + NADPH + H(+) = octanoyl-CoA + NADP(+). The catalysed reaction is (2E)-decenoyl-CoA + NADPH + H(+) = decanoyl-CoA + NADP(+). The enzyme catalyses (2E)-dodecenoyl-CoA + NADPH + H(+) = dodecanoyl-CoA + NADP(+). It catalyses the reaction (2E)-tetradecenoyl-CoA + NADPH + H(+) = tetradecanoyl-CoA + NADP(+). It functions in the pathway lipid metabolism; fatty acid biosynthesis. Functionally, participates in chain elongation of fatty acids. Catalyzes the reduction of trans-2-enoyl-CoAs of varying chain lengths from 6:1 to 16:1, having maximum activity with 10:1 CoA. Has no 2,4-dienoyl-CoA reductase activity. The protein is Peroxisomal trans-2-enoyl-CoA reductase (PECR) of Pongo abelii (Sumatran orangutan).